The chain runs to 154 residues: Myoglobin (154 aa).

One can recognise a Globin domain in the interval 2–148 (GLSDQEWQHV…FRNDMASKYK (147 aa)). Residue histidine 65 coordinates nitrite. O2 is bound at residue histidine 65. Histidine 94 is a heme b binding site.

Monomeric.

It is found in the cytoplasm. The protein resides in the sarcoplasm. The catalysed reaction is Fe(III)-heme b-[protein] + nitric oxide + H2O = Fe(II)-heme b-[protein] + nitrite + 2 H(+). It carries out the reaction H2O2 + AH2 = A + 2 H2O. Monomeric heme protein which primary function is to store oxygen and facilitate its diffusion within muscle tissues. Reversibly binds oxygen through a pentacoordinated heme iron and enables its timely and efficient release as needed during periods of heightened demand. Depending on the oxidative conditions of tissues and cells, and in addition to its ability to bind oxygen, it also has a nitrite reductase activity whereby it regulates the production of bioactive nitric oxide. Under stress conditions, like hypoxia and anoxia, it also protects cells against reactive oxygen species thanks to its pseudoperoxidase activity. The protein is Myoglobin of Dromaius novaehollandiae (Emu).